The following is a 39-amino-acid chain: Antimicrobial peptide CHP1 (39 aa).

3 disulfides stabilise this stretch: cysteine 6–cysteine 28, cysteine 13–cysteine 34, and cysteine 18–cysteine 35.

Its function is as follows. Bactericidal activity; inhibits S.aureus and E.coli. This Gallus gallus (Chicken) protein is Antimicrobial peptide CHP1.